Consider the following 185-residue polypeptide: Ribosome-recycling factor (185 aa).

It belongs to the RRF family.

It localises to the cytoplasm. In terms of biological role, responsible for the release of ribosomes from messenger RNA at the termination of protein biosynthesis. May increase the efficiency of translation by recycling ribosomes from one round of translation to another. This is Ribosome-recycling factor from Chromobacterium violaceum (strain ATCC 12472 / DSM 30191 / JCM 1249 / CCUG 213 / NBRC 12614 / NCIMB 9131 / NCTC 9757 / MK).